A 298-amino-acid chain; its full sequence is 4-nitrophenylphosphatase (298 aa).

As to quaternary structure, homodimer. The N-terminus is blocked.

It catalyses the reaction 4-nitrophenyl phosphate + H2O = 4-nitrophenol + phosphate + H(+). With respect to regulation, activity enhanced by Mg(2+) ion but inhibited by Zn(2+) ion. The polypeptide is 4-nitrophenylphosphatase (pho2) (Schizosaccharomyces pombe (strain 972 / ATCC 24843) (Fission yeast)).